The primary structure comprises 418 residues: Serine protease inhibitor A3K (418 aa).

Residues 1–21 (MAFIVAMGMILMAGICPAVLC) form the signal peptide. N-linked (GlcNAc...) asparagine glycans are attached at residues asparagine 39, asparagine 105, asparagine 185, and asparagine 270. Residues 369-394 (GTEAAAATGVIGGIRKAILPAVHFNR) are RCL.

It belongs to the serpin family. As to expression, expressed in liver and secreted in plasma.

It localises to the secreted. Contrapsin inhibits trypsin-like proteases. This Mus musculus (Mouse) protein is Serine protease inhibitor A3K (Serpina3k).